A 312-amino-acid chain; its full sequence is Homoserine kinase (312 aa).

An ATP-binding site is contributed by 94–104; sequence PLGRGLGSSAA.

Belongs to the GHMP kinase family. Homoserine kinase subfamily.

It is found in the cytoplasm. It carries out the reaction L-homoserine + ATP = O-phospho-L-homoserine + ADP + H(+). The protein operates within amino-acid biosynthesis; L-threonine biosynthesis; L-threonine from L-aspartate: step 4/5. Catalyzes the ATP-dependent phosphorylation of L-homoserine to L-homoserine phosphate. The chain is Homoserine kinase from Caldanaerobacter subterraneus subsp. tengcongensis (strain DSM 15242 / JCM 11007 / NBRC 100824 / MB4) (Thermoanaerobacter tengcongensis).